The chain runs to 350 residues: DNA polymerase IV (350 aa).

Positions 6–187 (IIHIDMDAFY…LPVEKIFGIG (182 aa)) constitute a UmuC domain. Mg(2+) is bound by residues Asp-10 and Asp-105. Residue Glu-106 is part of the active site.

This sequence belongs to the DNA polymerase type-Y family. As to quaternary structure, monomer. It depends on Mg(2+) as a cofactor.

The protein localises to the cytoplasm. It carries out the reaction DNA(n) + a 2'-deoxyribonucleoside 5'-triphosphate = DNA(n+1) + diphosphate. Poorly processive, error-prone DNA polymerase involved in untargeted mutagenesis. Copies undamaged DNA at stalled replication forks, which arise in vivo from mismatched or misaligned primer ends. These misaligned primers can be extended by PolIV. Exhibits no 3'-5' exonuclease (proofreading) activity. May be involved in translesional synthesis, in conjunction with the beta clamp from PolIII. The polypeptide is DNA polymerase IV (Protochlamydia amoebophila (strain UWE25)).